Consider the following 499-residue polypeptide: 3-octaprenyl-4-hydroxybenzoate carboxy-lyase (499 aa).

Asparagine 173 is a binding site for Mn(2+). Prenylated FMN is bound by residues 176 to 178 (IYR), 190 to 192 (RWL), and 195 to 196 (RG). Position 239 (glutamate 239) interacts with Mn(2+). The active-site Proton donor is aspartate 288.

The protein belongs to the UbiD family. Homohexamer. Requires prenylated FMN as cofactor. Mn(2+) serves as cofactor.

The protein localises to the cell membrane. The enzyme catalyses a 4-hydroxy-3-(all-trans-polyprenyl)benzoate + H(+) = a 2-(all-trans-polyprenyl)phenol + CO2. It functions in the pathway cofactor biosynthesis; ubiquinone biosynthesis. Its function is as follows. Catalyzes the decarboxylation of 3-octaprenyl-4-hydroxy benzoate to 2-octaprenylphenol, an intermediate step in ubiquinone biosynthesis. The protein is 3-octaprenyl-4-hydroxybenzoate carboxy-lyase of Blochmanniella floridana.